The sequence spans 75 residues: Rugosin-LK1 (75 aa).

Residues 1–22 (MFTMKKSLLFLFFLGTISLSFC) form the signal peptide. A propeptide spanning residues 23-40 (EEERSADEDDEGEMTEEE) is cleaved from the precursor.

As to expression, expressed by the skin glands.

Its subcellular location is the secreted. In terms of biological role, has antimicrobial activity against Gram-positive bacteria S.aureus ATCC 2592 (MIC=10.0 uM), S.aureus ATCC 43300 (MIC=15.0 uM) and B.subtilis (MIC=40.0 uM), against Gram-negative bacteria E.coli ML-35P (MIC=10.0 uM), P.aeruginosa PA01 (MIC=5.0 uM) and P.aeruginosa ATCC 27853 (MIC=5.0 uM) and against fungus C.albicans ATCC 2002 (MIC=10.0 uM). The polypeptide is Rugosin-LK1 (Limnonectes kuhlii (Kuhl's Creek frog)).